A 366-amino-acid chain; its full sequence is Elongation factor Ts, mitochondrial (366 aa).

The N-terminal 50 residues, 1-50 (MAWSQSARKPMIGLLFRAQQHSARGYSYSAFQAHLSSSNVDQSATLLRRF), are a transit peptide targeting the mitochondrion.

The protein belongs to the EF-Ts family.

It localises to the mitochondrion. Associates with the EF-Tu.GDP complex and induces the exchange of GDP to GTP. It remains bound to the aminoacyl-tRNA.EF-Tu.GTP complex up to the GTP hydrolysis stage on the ribosome. This chain is Elongation factor Ts, mitochondrial, found in Oryza sativa subsp. japonica (Rice).